Consider the following 362-residue polypeptide: Peptide chain release factor 1 (362 aa).

At glutamine 240 the chain carries N5-methylglutamine.

Belongs to the prokaryotic/mitochondrial release factor family. Methylated by PrmC. Methylation increases the termination efficiency of RF1.

It localises to the cytoplasm. Functionally, peptide chain release factor 1 directs the termination of translation in response to the peptide chain termination codons UAG and UAA. The protein is Peptide chain release factor 1 of Bifidobacterium longum (strain NCC 2705).